Consider the following 345-residue polypeptide: Phosphoribosylformylglycinamidine cyclo-ligase (345 aa).

It belongs to the AIR synthase family.

The protein resides in the cytoplasm. It catalyses the reaction 2-formamido-N(1)-(5-O-phospho-beta-D-ribosyl)acetamidine + ATP = 5-amino-1-(5-phospho-beta-D-ribosyl)imidazole + ADP + phosphate + H(+). Its pathway is purine metabolism; IMP biosynthesis via de novo pathway; 5-amino-1-(5-phospho-D-ribosyl)imidazole from N(2)-formyl-N(1)-(5-phospho-D-ribosyl)glycinamide: step 2/2. This is Phosphoribosylformylglycinamidine cyclo-ligase from Anaeromyxobacter dehalogenans (strain 2CP-1 / ATCC BAA-258).